A 632-amino-acid polypeptide reads, in one-letter code: MTAEKALPLGNGKAAEEARESEAPGGGCSSGGAAPARHPRVKRDKAVHERGHWNNKVEFVLSVAGEIIGLGNVWRFPYLCYKNGGGAFLIPYVVFFICCGIPVFFLETALGQFTSEGGITCWRKVCPLFEGIGYATQVIEAHLNVYYIIILAWAIFYLSNCFTTELPWATCGHEWNTENCVEFQKLNVSNYSHVSLQNATSPVMEFWEHRVLAISDGIEHIGNLRWELALCLLAAWTICYFCIWKGTKSTGKVVYVTATFPYIMLLILLIRGVTLPGASEGIKFYLYPDLSRLSDPQVWVDAGTQIFFSYAICLGCLTALGSYNNYNNNCYRDCIMLCCLNSGTSFVAGFAIFSVLGFMAYEQGVPIAEVAESGPGLAFIAYPKAVTMMPLSPLWATLFFMMLIFLGLDSQFVCVESLVTAVVDMYPKVFRRGYRRELLILALSVISYFLGLVMLTEGGMYIFQLFDSYAASGMCLLFVAIFECICIGWVYGSNRFYDNIEDMIGYRPPSLIKWCWMIMTPGICAGIFIFFLIKYKPLKYNNIYTYPAWGYGIGWLMALSSMLCIPLWICITVWKTEGTLPEKLQKLTTPSTDLKMRGKLGVSPRMVTVNDCDAKLKSDGTIAAITEKETHF.

Residues methionine 1 to valine 41 are disordered. The Cytoplasmic portion of the chain corresponds to methionine 1 to glutamate 58. Serine 21 carries the phosphoserine modification. 3 helical membrane-spanning segments follow: residues phenylalanine 59–leucine 79, alanine 87–leucine 106, and glycine 131–leucine 151. Over alanine 152–arginine 225 the chain is Extracellular. N-linked (GlcNAc...) asparagine glycans are attached at residues asparagine 187, asparagine 190, and asparagine 198. The next 9 helical transmembrane spans lie at tryptophan 226 to tryptophan 244, valine 253 to isoleucine 270, isoleucine 306 to tyrosine 323, isoleucine 335 to leucine 356, methionine 389 to leucine 408, leucine 438 to threonine 456, glycine 473 to serine 493, tryptophan 514 to isoleucine 533, and isoleucine 553 to isoleucine 571. The Cytoplasmic segment spans residues threonine 572 to phenylalanine 632.

It belongs to the sodium:neurotransmitter symporter (SNF) (TC 2.A.22) family. SLC6A11 subfamily. Widespread distribution in the brain.

The protein localises to the cell membrane. It catalyses the reaction 4-aminobutanoate(out) + chloride(out) + 2 Na(+)(out) = 4-aminobutanoate(in) + chloride(in) + 2 Na(+)(in). The enzyme catalyses taurine(out) + chloride(out) + 2 Na(+)(out) = taurine(in) + chloride(in) + 2 Na(+)(in). It carries out the reaction beta-alanine(out) + chloride(out) + 2 Na(+)(out) = beta-alanine(in) + chloride(in) + 2 Na(+)(in). The catalysed reaction is hypotaurine(out) + chloride(out) + 2 Na(+)(out) = hypotaurine(in) + chloride(in) + 2 Na(+)(in). GABA transport is inhibited by SNAP-5114. Mediates sodium- and chloride-dependent transport of gamma-aminobutyric acid (GABA). Can also mediate transport of beta-alanine and to a lower extent that of taurine and hypotaurine. The protein is Sodium- and chloride-dependent GABA transporter 3 (SLC6A11) of Homo sapiens (Human).